A 166-amino-acid polypeptide reads, in one-letter code: uncharacterized protein (166 aa).

Its function is as follows. This protein may be involved in virus assembly. Essential for virus function. This is an uncharacterized protein from Sulfolobus spindle-shape virus 1 (SSV1).